A 932-amino-acid polypeptide reads, in one-letter code: UPF0182 protein Dred_1797 (932 aa).

7 consecutive transmembrane segments (helical) span residues Leu11 to Ile31, Ile53 to Leu73, Leu118 to Ala138, Ile180 to Asp200, Ile209 to Ile229, Tyr264 to Leu284, and Tyr292 to Ile312. The interval Asp861–Lys883 is disordered.

The protein belongs to the UPF0182 family.

It is found in the cell membrane. In Desulforamulus reducens (strain ATCC BAA-1160 / DSM 100696 / MI-1) (Desulfotomaculum reducens), this protein is UPF0182 protein Dred_1797.